The following is a 961-amino-acid chain: MITEGFPPNLNALKGSSLLEKRVDSLRQLNTTTVNQLLGLPGMTSTFTAPQLLQLRIIAITASAVSLIAGCLGMFFLSKMDKRRKVFRHDLIAFLIICDFLKAFILMIYPMIILINNSVYATPAFFNTLGWFTAFAIEGADMAIMIFAIHFAILIFKPNWKWRNKRSGNMEGGLYKKRSYIWPITALVPAILASLAFINYNKLNDDSDTTIILDNNNYNFPDSPRQGGYKPWSAWCYLPPKPYWYKIVLSWGPRYFIIIFIFAVYLSIYIFITSESKRIKAQIGDFNHNVLEEEKEKKKLFGLGHWGKAKWYFRSYFKLPLLHLLRNLKNFFTISFIDPNEETDDSGSSNGTFNFGESSNEIPTLFRKTNTGSDENVSASGGVRLLDYNSAKPLDMSKYAMSEQPDLERNNPFDCENDITLNPSELVSKQKEHKVTFSVENEGLDTRKSSMLGHQTFSCQNSLESPLAMYDNKNDNSDITSNIKEKGGIINNNSNNDDDDNNNNNDNDNDNNNSNNNNNNNNNNNNNNNNNNNNNNNNNNNNNNSNNIKNNVDNNNTNPADNIPTLSNEAFTPSQQFSQERVNNNADRCENSSFTNVQQHFQAQTYKQMKKRRAQIQKNLRAIFIYPLSYIGIWLFPIIADALQYNHEIKHGPTMWVTYIDTCVRPLSCLVDVIVYLFKEKPWNYSWAKTESKYLIEKYILKGELGEKEILKFCHSNWGKRGWYYRGKWKKRKCWKYSTNPLKRILWFVERFFKQLFELKLHFSFYDNCDDFEYWENYYSAKDSNDNKRTESDETKTNSSDRSLPSNSLELQAMLNNITAEEVEVPLFWRIIHHIPMLGGIDLDELNRLLKIRYNNDHFSLPGLKFALNQNKSHDKHQDVSTNSMVKSSFFSSNIVTNDDENSIEEDKNLRYSDASASENYLVKPTIPGTTPDPIIEAQNDNDSSDSSGIDLIAFLRNGPL.

The Extracellular portion of the chain corresponds to 1 to 56 (MITEGFPPNLNALKGSSLLEKRVDSLRQLNTTTVNQLLGLPGMTSTFTAPQLLQLR). Residues 57-79 (IIAITASAVSLIAGCLGMFFLSK) traverse the membrane as a helical segment. At 80–91 (MDKRRKVFRHDL) the chain is on the cytoplasmic side. Residues 92 to 114 (IAFLIICDFLKAFILMIYPMIIL) traverse the membrane as a helical segment. Residues 115 to 133 (INNSVYATPAFFNTLGWFT) lie on the Extracellular side of the membrane. A helical membrane pass occupies residues 134 to 156 (AFAIEGADMAIMIFAIHFAILIF). The Cytoplasmic segment spans residues 157-178 (KPNWKWRNKRSGNMEGGLYKKR). A helical transmembrane segment spans residues 179-198 (SYIWPITALVPAILASLAFI). Over 199 to 250 (NYNKLNDDSDTTIILDNNNYNFPDSPRQGGYKPWSAWCYLPPKPYWYKIVLS) the chain is Extracellular. Residues 251-273 (WGPRYFIIIFIFAVYLSIYIFIT) form a helical membrane-spanning segment. The Cytoplasmic segment spans residues 274–619 (SESKRIKAQI…KKRRAQIQKN (346 aa)). Residue S373 is modified to Phosphoserine. The segment at 468–568 (AMYDNKNDNS…PADNIPTLSN (101 aa)) is disordered. Residues 502–558 (NNNNDNDNDNNNSNNNNNNNNNNNNNNNNNNNNNNNNNNNNNNSNNIKNNVDNNNTN) are compositionally biased toward low complexity. A helical transmembrane segment spans residues 620 to 642 (LRAIFIYPLSYIGIWLFPIIADA). Residues 643-822 (LQYNHEIKHG…AMLNNITAEE (180 aa)) are Extracellular-facing. The segment covering 783–796 (DSNDNKRTESDETK) has biased composition (basic and acidic residues). Positions 783–805 (DSNDNKRTESDETKTNSSDRSLP) are disordered. The chain crosses the membrane as a helical span at residues 823 to 843 (VEVPLFWRIIHHIPMLGGIDL). The Cytoplasmic segment spans residues 844–961 (DELNRLLKIR…LIAFLRNGPL (118 aa)). Phosphoserine is present on S903.

Belongs to the G-protein coupled receptor GPR1/git3 family.

It localises to the cell membrane. Functionally, seems to associate with GPA2 and act as G protein-coupled receptor that senses glucose and controls filamentous growth. It acts upstream of adenylate cyclase and is required for glucose activation of cAMP synthesis in concert with a glucose phosphorylation-dependent mechanism. The sequence is that of G protein-coupled receptor GPR1 (GPR1) from Saccharomyces cerevisiae (strain ATCC 204508 / S288c) (Baker's yeast).